We begin with the raw amino-acid sequence, 91 residues long: Small ribosomal subunit protein bS18 (91 aa).

The tract at residues 1–21 (MSDERAPQRSTGPRKKRPFQR) is disordered. A compositionally biased stretch (basic residues) spans 12-21 (GPRKKRPFQR).

This sequence belongs to the bacterial ribosomal protein bS18 family. In terms of assembly, part of the 30S ribosomal subunit. Forms a tight heterodimer with protein bS6.

In terms of biological role, binds as a heterodimer with protein bS6 to the central domain of the 16S rRNA, where it helps stabilize the platform of the 30S subunit. This is Small ribosomal subunit protein bS18 from Geotalea daltonii (strain DSM 22248 / JCM 15807 / FRC-32) (Geobacter daltonii).